A 257-amino-acid polypeptide reads, in one-letter code: MNVSSFLLAIDSGNTAIKWGLHTGDQWLVRGSALQSERMVLKQAWALLPAPPASVLISNVAGLQAADDLTALLKPWYVQPHWITASASQCGVTSRYTKPEQLGCDRWAALIAAWYRVQRACLVVDVGTAMTVDTLSSTGEFLGGIIVPGPDAMKQALAGCAGTLAAPVSSCFQNFPVNTENALYSGMIQALSGALERMYRLLSSYSEKQTLTEVIMTGGGAALLAQHIHIPHRIVDSLVLEGLAIIAKSGNFDYNKK.

ATP is bound at residue 11-18; the sequence is DSGNTAIK. Substrate-binding positions include tyrosine 96 and 103-106; that span reads GCDR. The active-site Proton acceptor is aspartate 105. K(+) is bound at residue aspartate 125. Position 128 (threonine 128) interacts with ATP. Threonine 179 provides a ligand contact to substrate.

It belongs to the type III pantothenate kinase family. As to quaternary structure, homodimer. Requires NH4(+) as cofactor. K(+) is required as a cofactor.

It is found in the cytoplasm. It catalyses the reaction (R)-pantothenate + ATP = (R)-4'-phosphopantothenate + ADP + H(+). The protein operates within cofactor biosynthesis; coenzyme A biosynthesis; CoA from (R)-pantothenate: step 1/5. Its function is as follows. Catalyzes the phosphorylation of pantothenate (Pan), the first step in CoA biosynthesis. This Nitrosomonas eutropha (strain DSM 101675 / C91 / Nm57) protein is Type III pantothenate kinase.